The chain runs to 319 residues: Nucleotide-binding protein Rru_A3448 (319 aa).

The disordered stretch occupies residues 1-34; sequence MGRSASLLRLRDPAPLPTDIAPDPAEAPPSPAAD. 42-49 provides a ligand contact to ATP; that stretch reads GMSGAGRT. 90 to 93 is a GTP binding site; sequence DTRT.

This sequence belongs to the RapZ-like family.

Displays ATPase and GTPase activities. This chain is Nucleotide-binding protein Rru_A3448, found in Rhodospirillum rubrum (strain ATCC 11170 / ATH 1.1.1 / DSM 467 / LMG 4362 / NCIMB 8255 / S1).